Here is a 792-residue protein sequence, read N- to C-terminus: RAD50-interacting protein 1 (792 aa).

The disordered stretch occupies residues 1 to 22 (MLPAGEIGASPAAPCCSESGDE). Residues 103–124 (IRSALKNAEESKQFLNQFLEQE) adopt a coiled-coil conformation. An RINT1/TIP20 domain is found at 220–792 (WHKILKDKLT…LRTNWPNTGK (573 aa)).

This sequence belongs to the RINT1 family. As to quaternary structure, component of the NRZ complex composed of NBAS, ZW10 and RINT1/TIP20L; NRZ associates with SNAREs STX18, USE1L, BNIP1/SEC20L and SEC22B (the assembly has been described as syntaxin 18 complex). Interacts directly with BNIP1/SEC20L and ZW10. Interacts with UVRAG. Interacts with RAD50 during late S and G2/M phases. Interacts with RBL2, preferentially with the active, hypophosphorylated form.

The protein resides in the cytoplasm. It is found in the endoplasmic reticulum membrane. Its function is as follows. Involved in regulation of membrane traffic between the Golgi and the endoplasmic reticulum (ER); the function is proposed to depend on its association in the NRZ complex which is believed to play a role in SNARE assembly at the ER. May play a role in cell cycle checkpoint control. Essential for telomere length control. This is RAD50-interacting protein 1 (RINT1) from Homo sapiens (Human).